Here is a 663-residue protein sequence, read N- to C-terminus: Protein KINESIN LIGHT CHAIN-RELATED 2 (663 aa).

The segment covering 1 to 14 (MDVGESNERVKDDS) has biased composition (basic and acidic residues). 2 disordered regions span residues 1–24 (MDVG…RSPL) and 86–146 (GESK…KVSV). S19 carries the phosphoserine modification. The segment covering 86 to 100 (GESKKEIILEKKEES) has biased composition (basic and acidic residues). Polar residues predominate over residues 102-111 (GEGSLSQKKP). 11 TPR repeats span residues 147-181 (DEES…ALRA), 200-233 (VMSL…PMIE), 243-276 (FAGC…QRQV), 285-318 (GETC…HKEN), 329-363 (AADR…SSQN), 369-402 (AAVD…FKQG), 411-444 (ALVY…YLKP), 454-487 (ATGF…YANA), 495-528 (AGIE…FRNS), 537-570 (GIAL…LEKE), and 579-612 (LAVY…REEK).

This sequence belongs to the kinesin light chain family.

The chain is Protein KINESIN LIGHT CHAIN-RELATED 2 from Arabidopsis thaliana (Mouse-ear cress).